The following is a 123-amino-acid chain: MNLIQQLEQEEIARLGKTIPEFAPGDTVVVQVKVKEGNRERLQAFEGVVIAKRNRGLNSSFIVRKISSGEGVERTFQAYSPLVASIEVKRRGDVRRAKLYYLRERSGKSARIKEKLVRKVKAA.

It belongs to the bacterial ribosomal protein bL19 family.

Its function is as follows. This protein is located at the 30S-50S ribosomal subunit interface and may play a role in the structure and function of the aminoacyl-tRNA binding site. The polypeptide is Large ribosomal subunit protein bL19 (Laribacter hongkongensis (strain HLHK9)).